Reading from the N-terminus, the 760-residue chain is MOXD1 homolog 2 (760 aa).

The interval 1-34 (MAHPRKAVATPATLQLGPPAQTAQSPAATLRHSR) is disordered. A compositionally biased stretch (low complexity) spans 18 to 34 (PPAQTAQSPAATLRHSR). The helical transmembrane segment at 47–67 (CFISCHTFNLFLLLLLLASGV) threads the bilayer. N-linked (GlcNAc...) asparagine glycans are attached at residues Asn-78, Asn-198, and Asn-223. Residues 117–233 (DDFRILWQII…DTMRLLYMYH (117 aa)) enclose the DOMON domain. 3 disulfides stabilise this stretch: Cys-339–Cys-367, Cys-467–Cys-581, and Cys-543–Cys-565. Asn-668 is a glycosylation site (N-linked (GlcNAc...) asparagine). The disordered stretch occupies residues 678–701 (RCKPKRPLAPPTERTAPPPASDLS). The chain crosses the membrane as a helical span at residues 740-760 (FISCLLWLGASSWWLLLMLRT).

The protein belongs to the copper type II ascorbate-dependent monooxygenase family.

It is found in the membrane. This chain is MOXD1 homolog 2 (olf413), found in Drosophila melanogaster (Fruit fly).